The sequence spans 270 residues: Phosphatidylglycerol--prolipoprotein diacylglyceryl transferase (270 aa).

A run of 4 helical transmembrane segments spans residues 19 to 39 (FPVY…LWLA), 56 to 76 (LVLI…VIFE), 92 to 112 (QGGL…ILFA), and 116 to 136 (GVSF…GQAI). R138 serves as a coordination point for a 1,2-diacyl-sn-glycero-3-phospho-(1'-sn-glycerol). 3 consecutive transmembrane segments (helical) span residues 178 to 198 (HPTF…LLAL), 206 to 226 (GELF…VEGL), and 236 to 256 (LRIA…FIIV).

Belongs to the Lgt family.

It is found in the cell membrane. The catalysed reaction is L-cysteinyl-[prolipoprotein] + a 1,2-diacyl-sn-glycero-3-phospho-(1'-sn-glycerol) = an S-1,2-diacyl-sn-glyceryl-L-cysteinyl-[prolipoprotein] + sn-glycerol 1-phosphate + H(+). It participates in protein modification; lipoprotein biosynthesis (diacylglyceryl transfer). Its function is as follows. Catalyzes the transfer of the diacylglyceryl group from phosphatidylglycerol to the sulfhydryl group of the N-terminal cysteine of a prolipoprotein, the first step in the formation of mature lipoproteins. This chain is Phosphatidylglycerol--prolipoprotein diacylglyceryl transferase, found in Bacillus cereus (strain Q1).